An 859-amino-acid polypeptide reads, in one-letter code: Leucine--tRNA ligase (859 aa).

The 'HIGH' region motif lies at 43–53; sequence PYPSGRIHMGH. A 'KMSKS' region motif is present at residues 614–618; the sequence is KMSKS. Lysine 617 contributes to the ATP binding site.

It belongs to the class-I aminoacyl-tRNA synthetase family.

It is found in the cytoplasm. It catalyses the reaction tRNA(Leu) + L-leucine + ATP = L-leucyl-tRNA(Leu) + AMP + diphosphate. This Magnetococcus marinus (strain ATCC BAA-1437 / JCM 17883 / MC-1) protein is Leucine--tRNA ligase.